The primary structure comprises 344 residues: Dihydroorotate dehydrogenase (quinone) (344 aa).

Residues 65–69 (AGLDK) and Thr-89 each bind FMN. Lys-69 serves as a coordination point for substrate. 114 to 118 (NRMGF) provides a ligand contact to substrate. 2 residues coordinate FMN: Asn-142 and Asn-175. Residue Asn-175 coordinates substrate. Ser-178 functions as the Nucleophile in the catalytic mechanism. Asn-180 lines the substrate pocket. The FMN site is built by Lys-220 and Thr-248. Position 249–250 (249–250 (NT)) interacts with substrate. Residues Gly-271, Gly-300, and 321 to 322 (YT) each bind FMN.

The protein belongs to the dihydroorotate dehydrogenase family. Type 2 subfamily. As to quaternary structure, monomer. It depends on FMN as a cofactor.

It is found in the cell membrane. It carries out the reaction (S)-dihydroorotate + a quinone = orotate + a quinol. The protein operates within pyrimidine metabolism; UMP biosynthesis via de novo pathway; orotate from (S)-dihydroorotate (quinone route): step 1/1. In terms of biological role, catalyzes the conversion of dihydroorotate to orotate with quinone as electron acceptor. This is Dihydroorotate dehydrogenase (quinone) from Paraburkholderia phymatum (strain DSM 17167 / CIP 108236 / LMG 21445 / STM815) (Burkholderia phymatum).